Here is a 351-residue protein sequence, read N- to C-terminus: Cytosolic sulfotransferase 9 (351 aa).

Positions 1–11 (MDEKDILRNLR) are enriched in basic and acidic residues. Residues 1-24 (MDEKDILRNLREEEEEEEENQSEE) are disordered. Acidic residues predominate over residues 12–22 (EEEEEEEENQS). 80-85 (KSGTTW) is a 3'-phosphoadenylyl sulfate binding site. Catalysis depends on H152, which acts as the Proton acceptor. 3'-phosphoadenylyl sulfate is bound by residues R174, S182, Y252, and 317–319 (RKG).

Belongs to the sulfotransferase 1 family. Expressed in roots and leaves.

It localises to the cytoplasm. In terms of biological role, sulfotransferase that utilizes 3'-phospho-5'-adenylyl sulfate (PAPS) as sulfonate donor. No activity with brassinosteroids. The chain is Cytosolic sulfotransferase 9 (STO9) from Arabidopsis thaliana (Mouse-ear cress).